The following is a 774-amino-acid chain: MGQKRQRDSKSSGFQSKKRKRAANDNAAADANDGWDGIVGADELNWTEVALPDRLEDAGGFFGLEEIEGVDIVRNPGNGEVRFKAKAGKPKKSVLKTKAPEEEETTHDDEWSGFSDNDTDAPETKPSPAVEEVGESDKKVDLKEAKEANKKDKKKEAKQLKKEQKEKGSAIQHDSSIKAGMSFAALQDAEEDDGVDVSAWDALNLSTELLTGISKMKFTSPTAVQAACIPHILDGHDVVGKASTGSGKTLAFGIPILEHYLEKNRDGHGDIIGKKDKKDSTPIALILSPTRELAHQLAKHIGELVTQAPGVNARIALLTGGLSVQKQQRLLAGADIVIGTPGRVWEIMSTGQGLIRKMQKIKFLVVDEADRLLSEGHFKEVEEIIGALDRVEDGDVLDEEDEAPEEESDPRSERQTLVFSATFHRDLQQKLAGKGKWTGGDIMNKKESMDYLLQKLNFREEKPKFIDTNPVSQMAENLKEGIVECGAMEKDLFLYTLLLYHPKHRTLVFTNSISAVRRLAQLLQALQLPALALHSSMAQKARLRSVERFSSPTANPGTILIATDVAARGLDIKGIDLVIHYHAPRTADTYVHRSGRTARAGASGKSVIICGPDEMVGVVRLAAKVHANMANGKRLPLESLELDRRVVGRVKPRVSLASRIVDANIAKEKISSEDNWLRNAAEDLGVEYDSEEFDEAEGKGRGRGRGRQQKQKEAGSVSKAELAGLRAELKQLLSQRVNVGVSERYLTAGRVDIEALLRGEGNASFLGPVDPLGF.

A compositionally biased stretch (basic and acidic residues) spans Met1–Lys10. Disordered stretches follow at residues Met1–Ile38 and Val73–Asp174. Over residues Lys84–Leu95 the composition is skewed to basic residues. Over residues Glu135–Gly168 the composition is skewed to basic and acidic residues. Positions Ser198–Ala226 match the Q motif motif. In terms of domain architecture, Helicase ATP-binding spans Ile229 to Asp441. Ala242–Thr249 is a binding site for ATP. The DEAD box motif lies at Asp367–Asp370. Residues Asp395–Ser408 show a composition bias toward acidic residues. Residues Asp395 to Arg414 form a disordered region. In terms of domain architecture, Helicase C-terminal spans Phe493–Asp643. Residues Asp689–Val717 form a disordered region.

The protein belongs to the DEAD box helicase family. DDX24/MAK5 subfamily.

It localises to the nucleus. The protein localises to the nucleolus. The enzyme catalyses ATP + H2O = ADP + phosphate + H(+). Its function is as follows. ATP-binding RNA helicase involved in the biogenesis of 60S ribosomal subunits and is required for the normal formation of 25S and 5.8S rRNAs. The protein is ATP-dependent RNA helicase mak5 (mak5) of Aspergillus clavatus (strain ATCC 1007 / CBS 513.65 / DSM 816 / NCTC 3887 / NRRL 1 / QM 1276 / 107).